The chain runs to 416 residues: Serine hydroxymethyltransferase (416 aa).

Residues Leu118 and 122 to 124 (GHL) contribute to the (6S)-5,6,7,8-tetrahydrofolate site. At Lys226 the chain carries N6-(pyridoxal phosphate)lysine. Residues Glu242 and 350-352 (SPF) each bind (6S)-5,6,7,8-tetrahydrofolate.

Belongs to the SHMT family. Homodimer. Pyridoxal 5'-phosphate is required as a cofactor.

Its subcellular location is the cytoplasm. It carries out the reaction (6R)-5,10-methylene-5,6,7,8-tetrahydrofolate + glycine + H2O = (6S)-5,6,7,8-tetrahydrofolate + L-serine. Its pathway is one-carbon metabolism; tetrahydrofolate interconversion. It functions in the pathway amino-acid biosynthesis; glycine biosynthesis; glycine from L-serine: step 1/1. Its function is as follows. Catalyzes the reversible interconversion of serine and glycine with tetrahydrofolate (THF) serving as the one-carbon carrier. This reaction serves as the major source of one-carbon groups required for the biosynthesis of purines, thymidylate, methionine, and other important biomolecules. Also exhibits THF-independent aldolase activity toward beta-hydroxyamino acids, producing glycine and aldehydes, via a retro-aldol mechanism. The sequence is that of Serine hydroxymethyltransferase from Helicobacter pylori (strain ATCC 700392 / 26695) (Campylobacter pylori).